A 1483-amino-acid polypeptide reads, in one-letter code: Cystic fibrosis transmembrane conductance regulator (1483 aa).

The Cytoplasmic segment spans residues 1–77; the sequence is MQRSPLEKAS…KLINALRRCF (77 aa). Residues 78-98 traverse the membrane as a helical segment; sequence FWRFAFYGILLYLGEVTKAVQ. Positions 81-365 constitute an ABC transmembrane type-1 1 domain; sequence FAFYGILLYL…WAVQTWYDSL (285 aa). Topologically, residues 99–122 are extracellular; that stretch reads PLLLGRIIASYDPDNKQERSIAIY. The helical transmembrane segment at 123–146 threads the bilayer; sequence LAIGLCLLFIMRPLLLHPAIFGLH. The Cytoplasmic portion of the chain corresponds to 147-195; it reads HIGMQIRIAMFSLIYKKTLKLSSRVLDKISIGQLVSLLSNNLNKFDEGL. A helical transmembrane segment spans residues 196 to 216; it reads ALAHFVWIAPLQVTLLMGLLW. The Extracellular segment spans residues 217–222; the sequence is DLLQAS. Residues 223–243 form a helical membrane-spanning segment; the sequence is AFCGLAFLIVLALVQAGLGRM. The Cytoplasmic portion of the chain corresponds to 244 to 298; that stretch reads IMKYRDQRAGKINERLVITSEVIENIQSVKAYCWEEAMEKIIENIRQTELKLTRK. Residues 299 to 319 traverse the membrane as a helical segment; it reads AAHVRYFNSSAFFFSGFFVVS. At 320–339 the chain is on the extracellular side; that stretch reads LSVLPYALIKTIILRKIFTT. Residues 340–358 form a helical membrane-spanning segment; sequence ISFCIVLRMAVTRQFPWAV. Residues 359–859 are Cytoplasmic-facing; sequence QTWYDSLGAI…YLRYITVHKN (501 aa). ATP-binding positions include W401, S434, 458–465, and Q493; that span reads GSTGAGKT. In terms of domain architecture, ABC transporter 1 spans 423-646; that stretch reads NGDNSLFFSN…RPDFSSKLMG (224 aa). C524 is lipidated: S-palmitoyl cysteine. A phosphoserine mark is found at S549 and S660. The tract at residues 654-832 is disordered R region; it reads SPERRNSIIT…EEINEEDLKE (179 aa). S670 is subject to Phosphoserine; by PKA. S686 is subject to Phosphoserine. A Glycyl lysine isopeptide (Lys-Gly) (interchain with G-Cter in ubiquitin) cross-link involves residue K688. Phosphoserine occurs at positions 700 and 712. A Phosphothreonine modification is found at T717. Phosphoserine occurs at positions 737, 768, 791, 796, and 814. Residues 860–880 form a helical membrane-spanning segment; sequence LIFVLIWCLVIFLAEVAVSLV. The region spanning 860-1156 is the ABC transmembrane type-1 2 domain; it reads LIFVLIWCLV…AVNSSIEVDS (297 aa). Residues 881–919 lie on the Extracellular side of the membrane; the sequence is VLWILRNLSSQDKGNSTQSVNSSYAVIFTSTSAYYIFYI. N887, N895, and N901 each carry an N-linked (GlcNAc...) asparagine glycan. The chain crosses the membrane as a discontinuously helical span at residues 920–940; it reads YVGVADTLLALGLFRGLPLVH. Residues 941-991 lie on the Cytoplasmic side of the membrane; it reads TLITVSKILHHKMLHSVLQAPMSTLNTLKAGGILNRFSKDIAILDDLLPLT. A helical membrane pass occupies residues 992–1012; that stretch reads IFDFIQLLLIVIGAVAVVSVL. Over 1013-1014 the chain is Extracellular; it reads QP. A helical transmembrane segment spans residues 1015 to 1035; it reads YIFLATVPVIAAFIILRAYFL. Residues 1036–1096 lie on the Cytoplasmic side of the membrane; sequence HTSQQLKQLE…TANWFLYLST (61 aa). The helical transmembrane segment at 1097–1117 threads the bilayer; the sequence is LRWFQMRMEIIFVIFFIAVTF. Residues 1118 to 1131 lie on the Extracellular side of the membrane; sequence ISILTTGEGEGTVG. Residues 1132-1152 form a helical membrane-spanning segment; sequence IILTLAMNIMGTLQWAVNSSI. Topologically, residues 1153-1483 are cytoplasmic; it reads EVDSLMRSVS…TEDEVQDTRL (331 aa). One can recognise an ABC transporter 2 domain in the interval 1213–1446; it reads MTVKDLTAKY…RSAFRQAIGP (234 aa). ATP is bound by residues Y1222 and 1247–1254; that span reads GRTGSGKS. An interaction with GORASP2 region spans residues 1389–1483; sequence RTLKQAFADC…TEDEVQDTRL (95 aa). A lipid anchor (S-palmitoyl cysteine) is attached at C1398. The disordered stretch occupies residues 1444–1483; that stretch reads IGPPERPGLLPHRLSSRQRSPSRIAALKEETEDEVQDTRL. At S1459 the chain carries Phosphoserine. Positions 1473 to 1483 are enriched in acidic residues; sequence ETEDEVQDTRL. Positions 1481 to 1483 match the PDZ-binding motif; the sequence is TRL.

The protein belongs to the ABC transporter superfamily. ABCC family. CFTR transporter (TC 3.A.1.202) subfamily. As to quaternary structure, monomer; does not require oligomerization for channel activity. May form oligomers in the membrane. Interacts with SLC26A3, SLC26A6 and NHERF1. Interacts with SHANK2. Interacts with MYO6. Interacts (via C-terminus) with GOPC (via PDZ domain); this promotes CFTR internalization and thereby decreases channel activity. Interacts with SLC4A7 through NHERF1. Found in a complex with MYO5B and RAB11A. Interacts with ANO1. Interacts with SLC26A8. Interacts with AHCYL1; the interaction increases CFTR activity. Interacts with CSE1L. The core-glycosylated form interacts with GORASP2 (via PDZ GRASP-type 1 domain) in respone to ER stress. Interacts with MARCHF2; the interaction leads to CFTR ubiqtuitination and degradation. Interacts with ADGRG2. In terms of processing, N-glycosylated. Post-translationally, phosphorylated; cAMP treatment promotes phosphorylation and activates the channel. Dephosphorylation decreases the ATPase activity (in vitro). Phosphorylation at PKA sites activates the channel. Phosphorylation at PKC sites enhances the response to phosphorylation by PKA. Phosphorylated by AMPK; this inhibits channel activity. Ubiquitinated, leading to its degradation in the lysosome. Deubiquitination by USP10 in early endosomes enhances its endocytic recycling to the cell membrane. Ubiquitinated by RNF185 during ER stress. Ubiquitinated by MARCHF2.

The protein resides in the apical cell membrane. Its subcellular location is the early endosome membrane. The protein localises to the cell membrane. It is found in the recycling endosome membrane. It localises to the endoplasmic reticulum membrane. The protein resides in the nucleus. It catalyses the reaction ATP + H2O + closed Cl(-) channel = ADP + phosphate + open Cl(-) channel.. The enzyme catalyses chloride(in) = chloride(out). It carries out the reaction hydrogencarbonate(in) = hydrogencarbonate(out). The catalysed reaction is ATP + H2O = ADP + phosphate + H(+). Epithelial ion channel that plays an important role in the regulation of epithelial ion and water transport and fluid homeostasis. Mediates the transport of chloride ions across the cell membrane. Possesses an intrinsic ATPase activity and utilizes ATP to gate its channel; the passive flow of anions through the channel is gated by cycles of ATP binding and hydrolysis by the ATP-binding domains. The ion channel is also permeable to HCO(3)(-); selectivity depends on the extracellular chloride concentration. Exerts its function also by modulating the activity of other ion channels and transporters. Contributes to the regulation of the pH and the ion content of the epithelial fluid layer. Modulates the activity of the epithelial sodium channel (ENaC) complex, in part by regulating the cell surface expression of the ENaC complex. May regulate bicarbonate secretion and salvage in epithelial cells by regulating the transporter SLC4A7. Can inhibit the chloride channel activity of ANO1. Plays a role in the chloride and bicarbonate homeostasis during sperm epididymal maturation and capacitation. The protein is Cystic fibrosis transmembrane conductance regulator of Canis lupus familiaris (Dog).